A 948-amino-acid polypeptide reads, in one-letter code: Glycine dehydrogenase (decarboxylating) (948 aa).

N6-(pyridoxal phosphate)lysine is present on Lys-696.

This sequence belongs to the GcvP family. As to quaternary structure, the glycine cleavage system is composed of four proteins: P, T, L and H. Pyridoxal 5'-phosphate is required as a cofactor.

The catalysed reaction is N(6)-[(R)-lipoyl]-L-lysyl-[glycine-cleavage complex H protein] + glycine + H(+) = N(6)-[(R)-S(8)-aminomethyldihydrolipoyl]-L-lysyl-[glycine-cleavage complex H protein] + CO2. The glycine cleavage system catalyzes the degradation of glycine. The P protein binds the alpha-amino group of glycine through its pyridoxal phosphate cofactor; CO(2) is released and the remaining methylamine moiety is then transferred to the lipoamide cofactor of the H protein. The chain is Glycine dehydrogenase (decarboxylating) from Akkermansia muciniphila (strain ATCC BAA-835 / DSM 22959 / JCM 33894 / BCRC 81048 / CCUG 64013 / CIP 107961 / Muc).